The primary structure comprises 298 residues: Peroxisomal 2,4-dienoyl-CoA reductase [(3E)-enoyl-CoA-producing] (298 aa).

Position 19 to 24 (19 to 24) interacts with NADP(+); it reads GGGSGI. A substrate-binding site is contributed by arginine 44. Aspartate 69 contributes to the NADP(+) binding site. Substrate-binding positions include arginine 71, phenylalanine 101, and 109–111; that span reads SPN. NADP(+)-binding positions include lysine 173 and 200-206; that span reads PGPIGGT. Residues 279–298 are disordered; the sequence is SRAVEKRSRAKPVGLPTSKL. A Microbody targeting signal motif is present at residues 296–298; that stretch reads SKL.

The protein belongs to the short-chain dehydrogenases/reductases (SDR) family. 2,4-dienoyl-CoA reductase subfamily.

Its subcellular location is the peroxisome. The enzyme catalyses a (2E,4Z)-dienoyl-CoA + NADPH + H(+) = a 4,5-saturated-(3E)-enoyl-CoA + NADP(+). The catalysed reaction is a (2E,4E)-dienoyl-CoA + NADPH + H(+) = a 4,5-saturated-(3E)-enoyl-CoA + NADP(+). In terms of biological role, auxiliary enzyme of beta-oxidation. Participates in the degradation of unsaturated fatty enoyl-CoA esters having double bonds in both even- and odd-numbered positions in peroxisome. Catalyzes the NADP-dependent reduction of 2,4-dienoyl-CoA to yield trans-3-enoyl-CoA. This Arabidopsis thaliana (Mouse-ear cress) protein is Peroxisomal 2,4-dienoyl-CoA reductase [(3E)-enoyl-CoA-producing].